A 137-amino-acid polypeptide reads, in one-letter code: Large ribosomal subunit protein uL16 (137 aa).

Belongs to the universal ribosomal protein uL16 family. Part of the 50S ribosomal subunit.

Binds 23S rRNA and is also seen to make contacts with the A and possibly P site tRNAs. In Allorhizobium ampelinum (strain ATCC BAA-846 / DSM 112012 / S4) (Agrobacterium vitis (strain S4)), this protein is Large ribosomal subunit protein uL16.